The chain runs to 496 residues: MYFQHQFSSLNLNSFLPEGILIFNIIFILILDLVSQKENKSMLVKISFIGLLLSMLTLIQQWYHESTIAFLGSFEVNHFTTCFRLIISLCCILCIPLSFEYIKCSGIRLTEFIIFLLFTTLGAMILSSANDLITIFISLECLGLGSYLLTGYVKKDIRSNEAGMKYLIIGGTSSSIFAYGLSWLYGLSGGSIYLKSIAYSFSHLNPSYSLASWFAYICIIVGIGFKLSLVPFHRWSPDVYEGSPTPVVAFLSIISKAGALALTIRISDIIFPILEQDSNSILQILAILSMIVGNLLAMVETSMKRILTYSSIAQAGYLLIGIVAGRNNGYASLLVYMIFYLFMNIGAFSCIILFGLRTGTDQIRDYTGLYTKDPWLASCLSLCLLSLAGIPPLTGFFGKILLFWSAWQSGFYFLVMTGIFTSIVSIYYYIRIVKFLVVAKEKDISYYVKKYSTYKSNSLMKQNPIELNIYLCTFISGFVGIFMNPVIYFAQQSILK.

14 consecutive transmembrane segments (helical) span residues 14 to 34 (SFLPEGILIFNIIFILILDLV), 42 to 62 (MLVKISFIGLLLSMLTLIQQW), 79 to 99 (FTTCFRLIISLCCILCIPLSF), 109 to 129 (LTEFIIFLLFTTLGAMILSSA), 133 to 153 (ITIFISLECLGLGSYLLTGYV), 167 to 187 (LIIGGTSSSIFAYGLSWLYGL), 210 to 230 (LASWFAYICIIVGIGFKLSLV), 244 to 264 (PTPVVAFLSIISKAGALALTI), 281 to 301 (ILQILAILSMIVGNLLAMVET), 305 to 325 (RILTYSSIAQAGYLLIGIVAG), 334 to 354 (LVYMIFYLFMNIGAFSCIILF), 377 to 397 (ASCLSLCLLSLAGIPPLTGFF), 400 to 420 (ILLFWSAWQSGFYFLVMTGIF), and 469 to 489 (IYLCTFISGFVGIFMNPVIYF).

Belongs to the complex I subunit 2 family. As to quaternary structure, NDH is composed of at least 16 different subunits, 5 of which are encoded in the nucleus.

The protein resides in the plastid. The protein localises to the chloroplast thylakoid membrane. The catalysed reaction is a plastoquinone + NADH + (n+1) H(+)(in) = a plastoquinol + NAD(+) + n H(+)(out). It carries out the reaction a plastoquinone + NADPH + (n+1) H(+)(in) = a plastoquinol + NADP(+) + n H(+)(out). In terms of biological role, NDH shuttles electrons from NAD(P)H:plastoquinone, via FMN and iron-sulfur (Fe-S) centers, to quinones in the photosynthetic chain and possibly in a chloroplast respiratory chain. The immediate electron acceptor for the enzyme in this species is believed to be plastoquinone. Couples the redox reaction to proton translocation, and thus conserves the redox energy in a proton gradient. The chain is NAD(P)H-quinone oxidoreductase subunit 2, chloroplastic from Chara vulgaris (Common stonewort).